The following is a 233-amino-acid chain: Probable flavin reductase (233 aa).

Residues 1 to 133 (MLCSIEKIEP…NSLAQGFNQP (133 aa)) form the FAD-binding FR-type domain. 111–115 (GGTGM) provides a ligand contact to pyridine.

The protein belongs to the Fre/LuxG FAD/NAD(P) flavoprotein oxidoreductase family.

Probable flavin reductase in the luminescent systems of different marine bacteria. The protein is Probable flavin reductase (luxG) of Vibrio harveyi (Beneckea harveyi).